The chain runs to 1345 residues: DNA-directed RNA polymerase subunit beta' (1345 aa).

Residues cysteine 60, cysteine 62, cysteine 75, and cysteine 78 each coordinate Zn(2+). Mg(2+) is bound by residues aspartate 536, aspartate 538, and aspartate 540. Zn(2+) is bound by residues cysteine 895, cysteine 974, cysteine 981, and cysteine 984.

Belongs to the RNA polymerase beta' chain family. As to quaternary structure, the RNAP catalytic core consists of 2 alpha, 1 beta, 1 beta' and 1 omega subunit. When a sigma factor is associated with the core the holoenzyme is formed, which can initiate transcription. Mg(2+) is required as a cofactor. The cofactor is Zn(2+).

The catalysed reaction is RNA(n) + a ribonucleoside 5'-triphosphate = RNA(n+1) + diphosphate. DNA-dependent RNA polymerase catalyzes the transcription of DNA into RNA using the four ribonucleoside triphosphates as substrates. The protein is DNA-directed RNA polymerase subunit beta' of Bifidobacterium longum (strain DJO10A).